Reading from the N-terminus, the 419-residue chain is MAAEVLPSARWQYCGAPDGSQRAVLVQFSNGKLQSPGNMRFTLYENKDSTNPRKRNQRILAAETDRLSYVGNNFGTGALKCNTLCRHFVGILNKTSGQMEVYDAELFNMQPLFSDVSVESELALESQTKTYREKMDSCIEAFGTTKQKRALNTRRMNRVGNESLNRAVAKAAETIIDTKGVTALVSDAIHNDLQDDSLYLPPCYDDAAKPEDVYKFEDLLSPAEYEALQSPSEAFRNVTSEEILKMIEENSHCTFVIEALKSLPSDVESRDRQARCIWFLDTLIKFRAHRVVKRKSALGPGVPHIINTKLLKHFTCLTYNNGRLRNLISDSMKAKITAYVIILALHIHDFQIDLTVLQRDLKLSEKRMMEIAKAMRLKISKRRVSVAAGSEEDHKLGTLSLPLPPAQTSDRLAKRRKIT.

A phosphoserine mark is found at serine 35 and serine 163. Lysine 373 bears the N6-acetyllysine mark. A disordered region spans residues 397–419 (GTLSLPLPPAQTSDRLAKRRKIT).

It belongs to the eukaryotic RPA49/POLR1E RNA polymerase subunit family. Component of the RNA polymerase I (Pol I) complex consisting of 13 subunits: a ten-subunit catalytic core composed of POLR1A/RPA1, POLR1B/RPA2, POLR1C/RPAC1, POLR1D/RPAC2, POLR1H/RPA12, POLR2E/RPABC1, POLR2F/RPABC2, POLR2H/RPABC3, POLR2K/RPABC4 and POLR2L/RPABC5; a mobile stalk subunit POLR1F/RPA43 protruding from the core and additional subunits homologous to general transcription factors POLR1E/RPA49 and POLR1G/RPA34. Forms a heterodimer with POLR1G/RPA34. Interacts with POLR1G. Also binds UBTF/UBF. Interacts with PWP1. Post-translationally, acetylated at Lys-373 by CREBBP/CBP, leading to decreased RNA polymerase I transcription. In normal conditions, deacetylated by SIRT7, promoting the association of RNA polymerase I with the rDNA promoter region and coding region. In response to stress, SIRT7 is released from nucleoli leading to hyperacetylation of POLR1E/PAF53 and decreased association of RNA polymerase I with the rDNA promoter region.

Its subcellular location is the nucleus. The protein resides in the nucleolus. Component of RNA polymerase I (Pol I), a DNA-dependent RNA polymerase which synthesizes ribosomal RNA precursors using the four ribonucleoside triphosphates as substrates. Appears to be involved in the formation of the initiation complex at the promoter by mediating the interaction between Pol I and UBTF/UBF. This chain is DNA-directed RNA polymerase I subunit RPA49 (POLR1E), found in Homo sapiens (Human).